We begin with the raw amino-acid sequence, 485 residues long: ATP-dependent protease ATPase subunit HslU (485 aa).

ATP-binding positions include I22 and 64–69 (GVGKTE). The interval 146–189 (KKTAATSAQPQDVSQASSGTTISLPSVSSTAQAEEHKAQNENDM) is disordered. The span at 149–177 (AATSAQPQDVSQASSGTTISLPSVSSTAQ) shows a compositional bias: polar residues. Over residues 178 to 189 (AEEHKAQNENDM) the composition is skewed to basic and acidic residues. Residues D297, E363, and R435 each contribute to the ATP site.

Belongs to the ClpX chaperone family. HslU subfamily. In terms of assembly, a double ring-shaped homohexamer of HslV is capped on each side by a ring-shaped HslU homohexamer. The assembly of the HslU/HslV complex is dependent on binding of ATP.

The protein localises to the cytoplasm. In terms of biological role, ATPase subunit of a proteasome-like degradation complex; this subunit has chaperone activity. The binding of ATP and its subsequent hydrolysis by HslU are essential for unfolding of protein substrates subsequently hydrolyzed by HslV. HslU recognizes the N-terminal part of its protein substrates and unfolds these before they are guided to HslV for hydrolysis. In Treponema denticola (strain ATCC 35405 / DSM 14222 / CIP 103919 / JCM 8153 / KCTC 15104), this protein is ATP-dependent protease ATPase subunit HslU.